We begin with the raw amino-acid sequence, 347 residues long: Transcription factor JunB (347 aa).

Residues Lys-4, Lys-33, and Lys-36 each participate in a glycyl lysine isopeptide (Lys-Gly) (interchain with G-Cter in SUMO2) cross-link. The interval 51 to 73 (KAPGARGPGPEGGGGGSYFSGQG) is disordered. Residues 56 to 68 (RGPGPEGGGGGSY) show a composition bias toward gly residues. A Glycyl lysine isopeptide (Lys-Gly) (interchain with G-Cter in SUMO2) cross-link involves residue Lys-81. 2 positions are modified to phosphothreonine: Thr-102 and Thr-104. The residue at position 117 (Ser-117) is a Phosphoserine. Lys-141 is covalently cross-linked (Glycyl lysine isopeptide (Lys-Gly) (interchain with G-Cter in SUMO2)). Positions 239–253 (FKEEPQTVPEARSRD) are enriched in basic and acidic residues. The segment at 239–260 (FKEEPQTVPEARSRDATPPVSP) is disordered. Lys-240 is subject to N6-acetyllysine; alternate. A Glycyl lysine isopeptide (Lys-Gly) (interchain with G-Cter in SUMO1); alternate cross-link involves residue Lys-240. A Glycyl lysine isopeptide (Lys-Gly) (interchain with G-Cter in SUMO2); alternate cross-link involves residue Lys-240. Ser-251 carries the post-translational modification Phosphoserine. The residue at position 255 (Thr-255) is a Phosphothreonine. The residue at position 259 (Ser-259) is a Phosphoserine. The tract at residues 268–295 (RIKVERKRLRNRLAATKCRKRKLERIAR) is basic motif. Positions 268–331 (RIKVERKRLR…AQLKQKVMTH (64 aa)) constitute a bZIP domain. Residues 296–324 (LEDKVKTLKAENAGLSSTAGLLREQVAQL) form a leucine-zipper region. A Glycyl lysine isopeptide (Lys-Gly) (interchain with G-Cter in SUMO2) cross-link involves residue Lys-343.

Belongs to the bZIP family. Jun subfamily. As to quaternary structure, binds DNA as a homodimer or as a heterodimer with another member of the Jun/Fos family. Component of an AP-1 transcription factor complex composed of JUN-FOS heterodimers composed of JUN-FOS heterodimers. As part of the AP-1 transcription factor complex, forms heterodimers with FOSB, thereby binding to the AP-1 consensus sequence and stimulating transcription. Interacts with ITCH (via its WW domains). Ubiquitinated by ITCH, leading to its degradation.

It localises to the nucleus. Transcription factor involved in regulating gene activity following the primary growth factor response. Binds to the DNA sequence 5'-TGA[GC]TCA-3'. Heterodimerizes with proteins of the FOS family to form an AP-1 transcription complex, thereby enhancing its DNA binding activity to an AP-1 consensus sequence and its transcriptional activity. In Homo sapiens (Human), this protein is Transcription factor JunB (JUNB).